A 406-amino-acid chain; its full sequence is Tryptophan synthase beta chain (406 aa).

K99 bears the N6-(pyridoxal phosphate)lysine mark.

The protein belongs to the TrpB family. As to quaternary structure, tetramer of two alpha and two beta chains. Requires pyridoxal 5'-phosphate as cofactor.

The enzyme catalyses (1S,2R)-1-C-(indol-3-yl)glycerol 3-phosphate + L-serine = D-glyceraldehyde 3-phosphate + L-tryptophan + H2O. The protein operates within amino-acid biosynthesis; L-tryptophan biosynthesis; L-tryptophan from chorismate: step 5/5. Functionally, the beta subunit is responsible for the synthesis of L-tryptophan from indole and L-serine. The sequence is that of Tryptophan synthase beta chain from Brucella abortus (strain 2308).